A 541-amino-acid polypeptide reads, in one-letter code: uncharacterized protein (541 aa).

Residues 1 to 17 (MSFSATILFSPPSGSEA) form the signal peptide. 2 disordered regions span residues 28 to 47 (TSQG…TPIT) and 103 to 138 (GKVC…SNSL). Residues 103–116 (GKVCTADEDRESRA) show a composition bias toward basic and acidic residues. Residue T118 is modified to Phosphothreonine. Glycyl lysine isopeptide (Lys-Gly) (interchain with G-Cter in SUMO2) cross-links involve residues K128 and K223. A Phosphoserine modification is found at S226. The span at 232 to 243 (AIQRASSETGPE) shows a compositional bias: polar residues. Residues 232 to 254 (AIQRASSETGPESGTKLPATRPE) form a disordered region. A phosphoserine mark is found at S286 and S429. The segment at 494–526 (YNPNFQEDEGGGNEKGPVSPSYDQPHKTSCPDL) is disordered.

It localises to the secreted. This is an uncharacterized protein from Mus musculus (Mouse).